The following is a 301-amino-acid chain: uncharacterized protein (301 aa).

Residues serine 44 and tyrosine 107 each act as charge relay system in the active site. Tyrosine 133 (proton donor) is an active-site residue. Catalysis depends on lysine 162, which acts as the Schiff-base intermediate with substrate.

It belongs to the DapA family. Homotetramer.

It is found in the cytoplasm. This is an uncharacterized protein from Pyrobaculum neutrophilum (strain DSM 2338 / JCM 9278 / NBRC 100436 / V24Sta) (Thermoproteus neutrophilus).